The sequence spans 386 residues: Phosphoglycerate kinase (386 aa).

Substrate is bound by residues 21 to 23 (DLN), arginine 36, 59 to 62 (HLGR), arginine 112, and arginine 145. Residues lysine 196, glutamate 313, and 339–342 (GGDT) each bind ATP.

The protein belongs to the phosphoglycerate kinase family. Monomer.

Its subcellular location is the cytoplasm. The enzyme catalyses (2R)-3-phosphoglycerate + ATP = (2R)-3-phospho-glyceroyl phosphate + ADP. It participates in carbohydrate degradation; glycolysis; pyruvate from D-glyceraldehyde 3-phosphate: step 2/5. This chain is Phosphoglycerate kinase (pgk), found in Haemophilus influenzae (strain ATCC 51907 / DSM 11121 / KW20 / Rd).